We begin with the raw amino-acid sequence, 200 residues long: Thymidine kinase (200 aa).

ATP contacts are provided by residues 9–16 (STMNAGKS) and 88–91 (DEAH). Glu89 serves as the catalytic Proton acceptor. Zn(2+) is bound by residues Cys146, Cys148, Cys183, and His186.

Belongs to the thymidine kinase family. As to quaternary structure, homotetramer.

It is found in the cytoplasm. It catalyses the reaction thymidine + ATP = dTMP + ADP + H(+). The chain is Thymidine kinase from Rhizobium etli (strain ATCC 51251 / DSM 11541 / JCM 21823 / NBRC 15573 / CFN 42).